Here is a 520-residue protein sequence, read N- to C-terminus: Sensory neuron membrane protein 1 (520 aa).

Residues 1 to 5 (MKPKK) lie on the Cytoplasmic side of the membrane. The chain crosses the membrane as a helical span at residues 6–26 (LGIIGGSLLAFGILICAIAFP). The Extracellular segment spans residues 27–451 (PFLRSQVKKQ…KLKTVFKTIS (425 aa)). Asn64, Asn224, and Asn268 each carry an N-linked (GlcNAc...) asparagine glycan. Disulfide bonds link Cys264–Cys329, Cys293–Cys348, and Cys331–Cys337. Residues 452–472 (IVGFMKWFTIVSGTCVSGAAA) traverse the membrane as a helical segment. Topologically, residues 473-520 (ALFFKNKDKNKLDITKVTPQKGEEKKWPNQMTISTIQSAAVPPNLDAD) are cytoplasmic.

The protein belongs to the CD36 family.

Its subcellular location is the cell membrane. Its function is as follows. Plays an olfactory role that is not restricted to pheromone sensitivity. This is Sensory neuron membrane protein 1 from Apis mellifera (Honeybee).